We begin with the raw amino-acid sequence, 197 residues long: MAERVATVSRDTHETQIQVHVNLDGQGHFQCETGVAFLDHMLDQVARHGLIDLDIHAKGDLHIDDHHTVEDLGITLGQAVAQAIGDKRGIRRYGHAYVPLDEALSRVVVDFSGRPGLSMDVEFTRASIGRFDTQLFWEFFQGFVNHAQVTLHIDNLKGFNAHHQAETIFKAFGRALRMAVEPDPRMAGRMPSTKGSL.

This sequence belongs to the imidazoleglycerol-phosphate dehydratase family.

It is found in the cytoplasm. It carries out the reaction D-erythro-1-(imidazol-4-yl)glycerol 3-phosphate = 3-(imidazol-4-yl)-2-oxopropyl phosphate + H2O. The protein operates within amino-acid biosynthesis; L-histidine biosynthesis; L-histidine from 5-phospho-alpha-D-ribose 1-diphosphate: step 6/9. The chain is Imidazoleglycerol-phosphate dehydratase from Chromohalobacter salexigens (strain ATCC BAA-138 / DSM 3043 / CIP 106854 / NCIMB 13768 / 1H11).